Consider the following 31-residue polypeptide: MEAFTYTLLMTLGVVTLFFAVAFRDPPKFDK.

Residues 3-23 traverse the membrane as a helical segment; that stretch reads AFTYTLLMTLGVVTLFFAVAF.

The protein belongs to the PsbT family. PSII is composed of 1 copy each of membrane proteins PsbA, PsbB, PsbC, PsbD, PsbE, PsbF, PsbH, PsbI, PsbJ, PsbK, PsbL, PsbM, PsbT, PsbX, PsbY, Psb30/Ycf12, peripheral proteins PsbO, CyanoQ (PsbQ), PsbU, PsbV and a large number of cofactors. It forms dimeric complexes.

It localises to the cellular thylakoid membrane. Found at the monomer-monomer interface of the photosystem II (PS II) dimer, plays a role in assembly and dimerization of PSII. PSII is a light-driven water plastoquinone oxidoreductase, using light energy to abstract electrons from H(2)O, generating a proton gradient subsequently used for ATP formation. This chain is Photosystem II reaction center protein T, found in Prochlorococcus marinus (strain SARG / CCMP1375 / SS120).